Consider the following 417-residue polypeptide: Peroxisome biogenesis protein 20 (417 aa).

Over residues methionine 1–lysine 15 the composition is skewed to polar residues. Disordered regions lie at residues methionine 1–glycine 47 and asparagine 65–serine 101. A Glycyl cysteine thioester (Cys-Gly) (interchain with G-Cter in ubiquitin) cross-link involves residue cysteine 4. Residue lysine 15 forms a Glycyl lysine isopeptide (Lys-Gly) (interchain with G-Cter in ubiquitin) linkage. Over residues alanine 17–methionine 28 the composition is skewed to basic and acidic residues. Residues glutamine 37–glycine 47 are compositionally biased toward polar residues. The segment covering glutamine 71 to histidine 92 has biased composition (low complexity). Short sequence motifs (wxxxF/Y motif) lie at residues tryptophan 103–phenylalanine 107 and tryptophan 126–phenylalanine 130. A disordered region spans residues glycine 321–leucine 361. Over residues serine 323–alanine 336 the composition is skewed to polar residues. Positions valine 340–leucine 361 are enriched in basic and acidic residues. The short motif at tryptophan 411–tyrosine 415 is the WxxxF/Y motif 2 element.

It belongs to the peroxisomal targeting signal receptor family. In terms of assembly, interacts (via WxxxF/Y and LVxEF motifs) with PEX14; promoting translocation through the PEX13-PEX14 docking complex. Interacts with PEX7. Post-translationally, monoubiquitinated at Cys-4 by PEX2 during PEX20 passage through the PEX2-PEX10-PEX12 retrotranslocation channel: monoubiquitination acts as a signal for PEX20 extraction and is required for proper export from peroxisomes and recycling. When PEX5 recycling is compromised, polyubiquitinated at Lys-15 by PEX10 during its passage through the retrotranslocation channel, leading to its degradation.

The protein localises to the cytoplasm. The protein resides in the cytosol. It localises to the peroxisome matrix. Coreceptor required for the peroxisomal import of proteins containing a C-terminal PTS2-type peroxisomal targeting signal, such as 3-oxoacyl-CoA thiolase. Acts via its interaction with PEX7, promoting association between PEX7 bound to cargo proteins and the PEX13-PEX14 docking complex. PEX20 along with PEX7 and PTS2-containing cargo proteins are tranlocated into peroxisomes by passing through the PEX13-PEX14 docking complex. PEX20 coreceptor is then retrotranslocated into the cytosol, leading to release of bound cargo in the peroxisome matrix, and reset for a subsequent peroxisome import cycle. Also mediates peroxisomal import of proteins that do not contain PTS1- or PTS2-type peroxisomal targeting signals, such as acyl-CoA oxidases (Aox) izozymes. Import of acyl-CoA oxidases (Aox) izozymes is independent of PEX7. In Yarrowia lipolytica (strain CLIB 122 / E 150) (Yeast), this protein is Peroxisome biogenesis protein 20 (PEX20).